We begin with the raw amino-acid sequence, 267 residues long: Indole-3-glycerol phosphate synthase 1 (267 aa).

It belongs to the TrpC family.

It catalyses the reaction 1-(2-carboxyphenylamino)-1-deoxy-D-ribulose 5-phosphate + H(+) = (1S,2R)-1-C-(indol-3-yl)glycerol 3-phosphate + CO2 + H2O. Its pathway is amino-acid biosynthesis; L-tryptophan biosynthesis; L-tryptophan from chorismate: step 4/5. The chain is Indole-3-glycerol phosphate synthase 1 (trpC1) from Ralstonia nicotianae (strain ATCC BAA-1114 / GMI1000) (Ralstonia solanacearum).